Here is a 174-residue protein sequence, read N- to C-terminus: Adenine phosphoribosyltransferase (174 aa).

It belongs to the purine/pyrimidine phosphoribosyltransferase family. Homodimer.

It is found in the cytoplasm. The catalysed reaction is AMP + diphosphate = 5-phospho-alpha-D-ribose 1-diphosphate + adenine. The protein operates within purine metabolism; AMP biosynthesis via salvage pathway; AMP from adenine: step 1/1. Functionally, catalyzes a salvage reaction resulting in the formation of AMP, that is energically less costly than de novo synthesis. This Lachnoclostridium phytofermentans (strain ATCC 700394 / DSM 18823 / ISDg) (Clostridium phytofermentans) protein is Adenine phosphoribosyltransferase.